The following is a 111-amino-acid chain: Large ribosomal subunit protein uL24 (111 aa).

This sequence belongs to the universal ribosomal protein uL24 family. As to quaternary structure, part of the 50S ribosomal subunit.

In terms of biological role, one of two assembly initiator proteins, it binds directly to the 5'-end of the 23S rRNA, where it nucleates assembly of the 50S subunit. Functionally, one of the proteins that surrounds the polypeptide exit tunnel on the outside of the subunit. This is Large ribosomal subunit protein uL24 from Cytophaga hutchinsonii (strain ATCC 33406 / DSM 1761 / CIP 103989 / NBRC 15051 / NCIMB 9469 / D465).